Consider the following 293-residue polypeptide: Probable endoribonuclease YicC (293 aa).

It belongs to the YicC/YloC family. The cofactor is a divalent metal cation.

Functionally, negatively modulates sporulation, probably in response to nutrient conditions. Effects expression of sporulation regulator spo0A in an indirect manner, possibly via repression of the sinRR' operon. Probably a ssRNA endonuclease. In terms of biological role, might contribute to small RNA (sRNA) regulation. The sequence is that of Probable endoribonuclease YicC from Clostridioides difficile (strain 630) (Peptoclostridium difficile).